The chain runs to 347 residues: Aurora kinase A- and ninein-interacting protein (347 aa).

Positions 182–347 are interaction with AURKA; the sequence is QREAKRKREG…DSEGNRVIRH (166 aa). The segment at 273 to 347 is interaction with RBBP8/CtIP; it reads RDSWSQLFTE…DSEGNRVIRH (75 aa). Residue Ser-284 is modified to Phosphoserine. Residues 301 to 322 show a composition bias toward polar residues; sequence VTNARNQGSGQFPDSPQAQGQD. The disordered stretch occupies residues 301–325; that stretch reads VTNARNQGSGQFPDSPQAQGQDGPT.

It belongs to the AUNIP family. In terms of assembly, interacts (via C-terminus) with AURKA (via C-terminus). Interacts (via N-terminus) with NIN; this interaction blocks NIN phosphorylation by both AURKA and GSK3B. Identified in a complex with NIN and AURKA. Interacts with RBBP8/CtIP.

It is found in the nucleus. The protein resides in the chromosome. It localises to the cytoplasm. Its subcellular location is the cytoskeleton. The protein localises to the microtubule organizing center. It is found in the centrosome. The protein resides in the spindle pole. In terms of biological role, DNA-binding protein that accumulates at DNA double-strand breaks (DSBs) following DNA damage and promotes DNA resection and homologous recombination. Serves as a sensor of DNA damage: binds DNA with a strong preference for DNA substrates that mimic structures generated at stalled replication forks, and anchors RBBP8/CtIP to DSB sites to promote DNA end resection and ensuing homologous recombination repair. Inhibits non-homologous end joining (NHEJ). Required for the dynamic movement of AURKA at the centrosomes and spindle apparatus during the cell cycle. In Rattus norvegicus (Rat), this protein is Aurora kinase A- and ninein-interacting protein.